The sequence spans 467 residues: Glutamine synthetase (467 aa).

The 85-residue stretch at 14–98 (EEVEYVDIRF…VHCNVVEPDT (85 aa)) folds into the GS beta-grasp domain. The region spanning 106–467 (PRGAAVKAEA…PVEYQMYYSC (362 aa)) is the GS catalytic domain. 2 residues coordinate Mg(2+): glutamate 131 and glutamate 133. Aspartate 209 lines the ATP pocket. The Mg(2+) site is built by glutamate 214 and glutamate 221. L-glutamate-binding positions include 265–266 (NG) and glycine 266. Histidine 270 contributes to the Mg(2+) binding site. ATP is bound by residues 272–274 (NMS) and serine 274. L-glutamate contacts are provided by arginine 320, glutamate 326, and arginine 338. 2 residues coordinate ATP: arginine 338 and arginine 343. Mg(2+) is bound at residue glutamate 356. Arginine 358 serves as a coordination point for L-glutamate. Tyrosine 396 carries the post-translational modification O-AMP-tyrosine.

Belongs to the glutamine synthetase family. Oligomer of 12 subunits arranged in the form of two hexameric ring. Mg(2+) serves as cofactor.

It localises to the cytoplasm. It carries out the reaction L-glutamate + NH4(+) + ATP = L-glutamine + ADP + phosphate + H(+). Its activity is regulated as follows. The activity of this enzyme could be controlled by adenylation under conditions of abundant glutamine. In terms of biological role, catalyzes the ATP-dependent biosynthesis of glutamine from glutamate and ammonia. In Cereibacter sphaeroides (Rhodobacter sphaeroides), this protein is Glutamine synthetase.